The primary structure comprises 804 residues: Phenylalanine--tRNA ligase beta subunit (804 aa).

The tRNA-binding domain maps to Asp40–Ile155. Positions Gln409–Ala484 constitute a B5 domain. Asp462, Asp468, Glu471, and Glu472 together coordinate Mg(2+). Residues Pro710–Arg803 form the FDX-ACB domain.

It belongs to the phenylalanyl-tRNA synthetase beta subunit family. Type 1 subfamily. As to quaternary structure, tetramer of two alpha and two beta subunits. The cofactor is Mg(2+).

The protein localises to the cytoplasm. It carries out the reaction tRNA(Phe) + L-phenylalanine + ATP = L-phenylalanyl-tRNA(Phe) + AMP + diphosphate + H(+). In Geobacillus kaustophilus (strain HTA426), this protein is Phenylalanine--tRNA ligase beta subunit.